The sequence spans 359 residues: L-seryl-tRNA(Sec) kinase (359 aa).

An ATP-binding site is contributed by 25 to 32 (GLPAAGKS).

This sequence belongs to the L-seryl-tRNA(Sec) kinase family. Mg(2+) serves as cofactor.

The enzyme catalyses L-seryl-tRNA(Sec) + ATP = O-phospho-L-seryl-tRNA(Sec) + ADP. It functions in the pathway aminoacyl-tRNA biosynthesis; selenocysteinyl-tRNA(Sec) biosynthesis; selenocysteinyl-tRNA(Sec) from L-seryl-tRNA(Sec) (archaeal/eukaryal route): step 1/2. In terms of biological role, specifically phosphorylates seryl-tRNA(Sec) to O-phosphoseryl-tRNA(Sec), an activated intermediate for selenocysteine biosynthesis. No activity with other tRNAs has been detected. This Mus musculus (Mouse) protein is L-seryl-tRNA(Sec) kinase (Pstk).